The following is a 137-amino-acid chain: ATP synthase epsilon chain (137 aa).

This sequence belongs to the ATPase epsilon chain family. In terms of assembly, F-type ATPases have 2 components, CF(1) - the catalytic core - and CF(0) - the membrane proton channel. CF(1) has five subunits: alpha(3), beta(3), gamma(1), delta(1), epsilon(1). CF(0) has three main subunits: a, b and c.

The protein localises to the cell membrane. Functionally, produces ATP from ADP in the presence of a proton gradient across the membrane. This Desulforudis audaxviator (strain MP104C) protein is ATP synthase epsilon chain.